Consider the following 214-residue polypeptide: Membrane antigen containing repeating peptides (214 aa).

4 repeat units span residues 1 to 14 (QETS…EETL), 15 to 28 (QETS…EETL), 29 to 42 (QETS…EETL), and 43 to 56 (QETS…EETL). A disordered region spans residues 1-31 (QETSAKLADTEETLQETSAKLADTEETLQET). The tract at residues 1-56 (QETSAKLADTEETLQETSAKLADTEETLQETSAKLADTEETLQETSAKLADTEETL) is 4 X 14 AA tandem repeats. A disordered region spans residues 180 to 214 (CSLHPTPRRLGDVSNRENSIENKTRSASRLSGRLF). Basic and acidic residues predominate over residues 188-203 (RLGDVSNRENSIENKT).

Its subcellular location is the membrane. In Leishmania major, this protein is Membrane antigen containing repeating peptides.